The sequence spans 2335 residues: Pre-mRNA-processing-splicing factor 8 (2335 aa).

An N-acetylalanine modification is found at Ala-2. Residues 812–1303 form a reverse transcriptase homology domain region; it reads TTVHWLESRR…KIQTRIKIGL (492 aa). Residues Ser-859 and Ser-1358 each carry the phosphoserine modification. Residues 1304–1577 are linker; that stretch reads NSKMPSRFPP…TLKISLIQIF (274 aa). N6,N6-dimethyllysine is present on Lys-1425. The residue at position 1463 (Lys-1463) is an N6-acetyllysine. The interval 1513–1526 is important for branch point selection; that stretch reads MKWKKLTNAQRSGL. The segment at 1581–1752 is restriction endonuclease homology domain; sequence LWQKIHESIV…LRERIRKGLQ (172 aa). The segment at 1669 to 2034 is involved in interaction with pre-mRNA 5' splice site; the sequence is GDYDSHDIER…QIAEIEKQTK (366 aa). The RNase H homology domain stretch occupies residues 1767 to 2020; that stretch reads NYGELFSNQI…ILGMEISAPS (254 aa). The 132-residue stretch at 2103–2234 folds into the MPN domain; the sequence is TYILPKNVLK…LTAYKLTPSG (132 aa). The segment at 2301-2335 is required for interaction with EFTUD2 and SNRNP200; sequence PKEFYHEVHRPSHFLNFALLQEGEVYSADREDLYA.

In terms of assembly, part of the U5 snRNP complex. Component of the U4/U6-U5 tri-snRNP complex composed of the U4, U6 and U5 snRNAs and at least PRPF3, PRPF4, PRPF6, PRPF8, PRPF31, SNRNP200, TXNL4A, SNRNP40, DDX23, CD2BP2, PPIH, SNU13, EFTUD2, SART1 and USP39. Component of the U5.U4atac/U6atac snRNP complexes in U12-dependent spliceosomes. Within the minor spliceosome, which acts on U12-type introns, interacts with PPIL2 and RBM48. Core component of U2-type precatalytic, catalytic and postcatalytic spliceosomal complexes. Found in a mRNA splicing-dependent exon junction complex (EJC) with SRRM1. Interacts with U5 snRNP proteins SNRP116 and SNRNP40. Interacts with EFTUD2. Interacts (via the MPN (JAB/Mov34) domain) with PRPF3 ('Lys-63'-linked polyubiquitinated); may stabilize the U4/U6-U5 tri-snRNP complex. Interacts (via RNase H homology domain) with AAR2. Interacts with RPAP3 and URI1 in a ZNHIT2-dependent manner. Interacts with C9orf78. Interacts with SNRNP200; the interaction is direct. Interacts with TSSC4; the interaction is direct. Widely expressed.

It is found in the nucleus. Its subcellular location is the nucleus speckle. Its function is as follows. Plays a role in pre-mRNA splicing as core component of precatalytic, catalytic and postcatalytic spliceosomal complexes, both of the predominant U2-type spliceosome and the minor U12-type spliceosome. Functions as a scaffold that mediates the ordered assembly of spliceosomal proteins and snRNAs. Required for the assembly of the U4/U6-U5 tri-snRNP complex, a building block of the spliceosome. Functions as a scaffold that positions spliceosomal U2, U5 and U6 snRNAs at splice sites on pre-mRNA substrates, so that splicing can occur. Interacts with both the 5' and the 3' splice site. This chain is Pre-mRNA-processing-splicing factor 8 (PRPF8), found in Homo sapiens (Human).